The chain runs to 158 residues: GAF domain-containing protein A (158 aa).

The GAF domain occupies Asn32–Asn158.

This sequence belongs to the free Met sulfoxide reductase family.

This is GAF domain-containing protein A (gafA) from Dictyostelium discoideum (Social amoeba).